Here is a 296-residue protein sequence, read N- to C-terminus: 4-hydroxybenzoate octaprenyltransferase (296 aa).

9 helical membrane-spanning segments follow: residues 29–49 (IGIY…AEGV), 55–75 (LFIF…INDY), 102–122 (ALVL…FTNA), 124–141 (TIWL…YPFM), 146–166 (FYPQ…AFTA), 169–189 (GSLP…TVAY), 216–236 (ADRL…LLAG), 239–259 (FELG…FVWE), and 271–291 (CFNA…GIVL).

This sequence belongs to the UbiA prenyltransferase family. It depends on Mg(2+) as a cofactor.

It localises to the cell inner membrane. It catalyses the reaction all-trans-octaprenyl diphosphate + 4-hydroxybenzoate = 4-hydroxy-3-(all-trans-octaprenyl)benzoate + diphosphate. Its pathway is cofactor biosynthesis; ubiquinone biosynthesis. Its function is as follows. Catalyzes the prenylation of para-hydroxybenzoate (PHB) with an all-trans polyprenyl group. Mediates the second step in the final reaction sequence of ubiquinone-8 (UQ-8) biosynthesis, which is the condensation of the polyisoprenoid side chain with PHB, generating the first membrane-bound Q intermediate 3-octaprenyl-4-hydroxybenzoate. The polypeptide is 4-hydroxybenzoate octaprenyltransferase (Ectopseudomonas mendocina (strain ymp) (Pseudomonas mendocina)).